Reading from the N-terminus, the 369-residue chain is Cytoplasmic tRNA 2-thiolation protein 1 (369 aa).

This sequence belongs to the TtcA family. CTU1/NCS6/ATPBD3 subfamily.

The protein resides in the cytoplasm. Its pathway is tRNA modification; 5-methoxycarbonylmethyl-2-thiouridine-tRNA biosynthesis. Plays a central role in 2-thiolation of mcm(5)S(2)U at tRNA wobble positions of tRNA(Lys), tRNA(Glu) and tRNA(Gln). Directly binds tRNAs and probably acts by catalyzing adenylation of tRNAs, an intermediate required for 2-thiolation. It is unclear whether it acts as a sulfurtransferase that transfers sulfur from thiocarboxylated URM1 onto the uridine of tRNAs at wobble position. Prior mcm(5) tRNA modification by the elongator complex is required for 2-thiolation. May also be involved in protein urmylation. The protein is Cytoplasmic tRNA 2-thiolation protein 1 of Meyerozyma guilliermondii (strain ATCC 6260 / CBS 566 / DSM 6381 / JCM 1539 / NBRC 10279 / NRRL Y-324) (Yeast).